Here is a 363-residue protein sequence, read N- to C-terminus: 2,5-diketocamphane 1,2-monooxygenase 1 (363 aa).

FMN is bound by residues methionine 74 and 186-194; that span reads TGLTKNSSS.

Belongs to the bacterial luciferase oxidoreductase family. As to quaternary structure, homodimer. Likely forms a loose transient complex with a P.putida flavin reductase that provides the required FMNH(2) to the enzyme.

The catalysed reaction is (1R,4R)-bornane-2,5-dione + FMNH2 + O2 = (1R,4R)-5-oxo-1,2-campholide + FMN + H2O + H(+). The protein operates within terpene metabolism; (R)-camphor degradation. In terms of biological role, involved in the degradation and assimilation of (+)-camphor, which allows P.putida strain NCIMB 10007 to grow on this enantiomer of camphor as the sole carbon source. Catalyzes the FMNH(2)-dependent lactonization of 2,5-diketocamphane via a Baeyer-Villiger oxidation to produce the unstable lactone 5-oxo-1,2-campholide with (R,R) configuration, that presumably undergoes spontaneous hydrolysis to form 2-oxo-Delta(3)-4,5,5-trimethylcyclopentenylacetate. Is also able to convert (+)-camphor and norcamphor to the corresponding lactone in vitro. Shows no conversion of (-)-camphor, (+)-fenchone, (-)-fenchone, and (+)-nopinone. Acts only on bicyclic ketones; is not active towards monocyclic ketones, aromatic ketones, the aliphatic 2-decanone, 1-indanone and progesterone. The polypeptide is 2,5-diketocamphane 1,2-monooxygenase 1 (Pseudomonas putida (Arthrobacter siderocapsulatus)).